A 662-amino-acid chain; its full sequence is UPF0313 protein CPR_1216 (662 aa).

In terms of domain architecture, Radical SAM core spans 296–567 (AIEEVKFSLV…AMQRALLQFK (272 aa)). Residues cysteine 310, cysteine 314, and cysteine 317 each coordinate [4Fe-4S] cluster. The disordered stretch occupies residues 597 to 662 (RDKNSFGKGN…QRVSKGKKRR (66 aa)). Residues 618-632 (SRNENSGRRESEDKK) show a composition bias toward basic and acidic residues. Positions 633 to 644 (RSSHSKKQRGNK) are enriched in basic residues.

This sequence belongs to the UPF0313 family. Requires [4Fe-4S] cluster as cofactor.

The protein is UPF0313 protein CPR_1216 of Clostridium perfringens (strain SM101 / Type A).